A 1297-amino-acid chain; its full sequence is MTVKTFRGSPALSEFRLTQLQQKCQQYQLPITSVYAEYLHFVEQKTSLVEDEIVKLQALLHYGSMFSELKPAGYCLIVTPRVGTISSWSSKATDIAHNCGLSKVNRIERGIAYYFNIERDLTEAELATLKDLLHDRMLETVLNHETEAALLFTQQEPKALTTIDILNGGRQALERANIALGLALADDEMDYLVESFTALKRNPQDVELYMFAQANSEHCRHKIFNADWIIDGKKQDKSLFKMIKNTFEQTPDFVLSAYKDNAAVMEGSKVGRWFPDPDGQYRVHQEDAHILMKVETHNHPTAISPFPGAATGSGGEIRDEGATGRGAKPKAGLTGFSVSNLVIPNFEQPWENPLSKPNRIASALDIMIDAPLGSAAFNNEFGRPALLGYFRTYEEKVNSFAGKEVRGYHKPIMLAGGIGNIRGEQVQKGEIPIGAKLIVLGGAAMNIGLGGGAASSMDSGKSKEDLDFASVQRENPEMERRCQEVIDRCWQLGEENPILFIHDVGAGGLSNAMPELVHDGRRGGKFDLRSILCDEKGMSPLEIWCNESQERYVLAVAPENLELFTALCERERAPFAVIGEATQAEHLILHDSHFDNNPIDLPMNVLLGKTPKMTREVLSKTVENQSLKTEGIQLKEAFHRVLRLPVVAEKTFLITIGDRSVTGMVARDQMVGPWQIPVSDVAVTTASLDSYHGEAMAMGERSPVALLNFSASARLAVAEAITNIAGTHIGEMKRIKLSANWMSAAGHTGEDAGLYEAVKAVGEELCPALGLTIPVGKDSMSMKTTWIDNGEQKSVTAPLSLVISAFARVEDVRKTLTPQLRTDKGLSSLLLIDLGEGHNRLGATALAQVYKQLGDKPADVVKVQRLKDFYNAMQTLVAEDKLLAYHDRSDGGLITTLAEMAFAGHCGVEVDISALGDNDLAVLFNEELGAVIQVADSQLESVREVLKAHNLLGITHQLGTVTADDRFEISRGSHKLFSEKRSELRSIWAELTYQMQRLRDNPECAEQEFEAKKNPDDKGLSAFLTYDVNEDITAPFINKGVKPTIAILREQGVNSHYEMAAAFDRAGFNAIDVHMSDLMIGRRNLAEFNAMVACGGFSYGDVLGAGGGWAKSILFNPKLHEQFSQFFINPNTLTLGVCNGCQMISNLAEIIPGTENWPHFVRNKSERFEARVSLVKINEVDSVWFAGMAGSHMPIAVSHGEGQVKFKSVEQFAGLKAQGIIAAQYIDNNGSPTELYPANPNGSAEGITAITNLDGRVAIMMPHPERVFRAVSNSWHPENWTEDGAWMRLFRNARMVF.

Residues 303-329 are disordered; the sequence is ISPFPGAATGSGGEIRDEGATGRGAKP. An ATP-binding site is contributed by 308–319; the sequence is GAATGSGGEIRD. Aspartate 680, glutamate 719, asparagine 723, and aspartate 887 together coordinate Mg(2+). Residue serine 889 participates in ATP binding. The region spanning 1045 to 1297 is the Glutamine amidotransferase type-1 domain; that stretch reads IAILREQGVN…RLFRNARMVF (253 aa). The Nucleophile role is filled by cysteine 1138. Residues histidine 1263 and glutamate 1265 contribute to the active site.

This sequence in the N-terminal section; belongs to the FGAMS family. As to quaternary structure, monomer.

The protein resides in the cytoplasm. The enzyme catalyses N(2)-formyl-N(1)-(5-phospho-beta-D-ribosyl)glycinamide + L-glutamine + ATP + H2O = 2-formamido-N(1)-(5-O-phospho-beta-D-ribosyl)acetamidine + L-glutamate + ADP + phosphate + H(+). It functions in the pathway purine metabolism; IMP biosynthesis via de novo pathway; 5-amino-1-(5-phospho-D-ribosyl)imidazole from N(2)-formyl-N(1)-(5-phospho-D-ribosyl)glycinamide: step 1/2. Its function is as follows. Phosphoribosylformylglycinamidine synthase involved in the purines biosynthetic pathway. Catalyzes the ATP-dependent conversion of formylglycinamide ribonucleotide (FGAR) and glutamine to yield formylglycinamidine ribonucleotide (FGAM) and glutamate. This Haemophilus influenzae (strain 86-028NP) protein is Phosphoribosylformylglycinamidine synthase.